A 304-amino-acid polypeptide reads, in one-letter code: tRNA dimethylallyltransferase (304 aa).

G10–S17 contacts ATP. T12–S17 contributes to the substrate binding site. The interaction with substrate tRNA stretch occupies residues D35–Q38.

Belongs to the IPP transferase family. As to quaternary structure, monomer. Requires Mg(2+) as cofactor.

The catalysed reaction is adenosine(37) in tRNA + dimethylallyl diphosphate = N(6)-dimethylallyladenosine(37) in tRNA + diphosphate. Functionally, catalyzes the transfer of a dimethylallyl group onto the adenine at position 37 in tRNAs that read codons beginning with uridine, leading to the formation of N6-(dimethylallyl)adenosine (i(6)A). This is tRNA dimethylallyltransferase from Gloeothece citriformis (strain PCC 7424) (Cyanothece sp. (strain PCC 7424)).